The primary structure comprises 97 residues: MTKMSKGPRSGSRRVMTKSVKNKGMPKVNEMMKTFEVGDRAAIVINSAVPDGMPHHDFQGITGVITGMQGSCYILSFKVGNVEKKVIAAPVHLRKVQ.

Residues 1-23 (MTKMSKGPRSGSRRVMTKSVKNK) form a disordered region.

This sequence belongs to the eukaryotic ribosomal protein eL21 family.

The chain is Large ribosomal subunit protein eL21 from Picrophilus torridus (strain ATCC 700027 / DSM 9790 / JCM 10055 / NBRC 100828 / KAW 2/3).